The following is a 262-amino-acid chain: Large ribosomal subunit protein uL10m (262 aa).

The N-terminal 28 residues, 1-28 (MAAAVAGILRGGLPPRAAWLPTLQTVRH), are a transit peptide targeting the mitochondrion. The tract at residues 243 to 262 (GDCATSANEKLHPPDPAPDA) is disordered.

It belongs to the universal ribosomal protein uL10 family. As to quaternary structure, component of the mitochondrial ribosome large subunit (39S) which comprises a 16S rRNA and about 50 distinct proteins.

It is found in the mitochondrion. The sequence is that of Large ribosomal subunit protein uL10m (Mrpl10) from Mus musculus (Mouse).